A 1313-amino-acid chain; its full sequence is Kinesin-like protein KIN-12B (1313 aa).

The disordered stretch occupies residues 1–74 (MKHFMMPRNA…PPRPPSSNPL (74 aa)). A compositionally biased stretch (polar residues) spans 17 to 26 (ESQSPNPSLT). Residues 96–431 (GVKVIVRMKP…LRFAQRAKAI (336 aa)) enclose the Kinesin motor domain. ATP is bound at residue 170-177 (GQTGSGKT). Microtubules-binding stretches follow at residues 298 to 302 (SSRSH), 331 to 337 (VDLAGSE), and 380 to 384 (HIPYR). Residues 429 to 467 (KAIQNKAIVNEVMQDDVNFLREVIRQLRDELQRVKDDKG) form a neck region. The segment at 685-709 (ESASPKIRNSRKSLRTTSMSTASQK) is disordered. A compositionally biased stretch (polar residues) spans 699 to 708 (RTTSMSTASQ). Coiled coils occupy residues 932 to 1003 (LDEE…YTDS), 1062 to 1130 (AEEL…RIRE), and 1167 to 1241 (EKEV…TEIS).

This sequence belongs to the TRAFAC class myosin-kinesin ATPase superfamily. Kinesin family. KIN-12 subfamily. In terms of assembly, homodimer and heterodimer with KIN12A. Interacts with TIO.

The protein localises to the cytoplasm. It is found in the cytoskeleton. The protein resides in the phragmoplast. Functionally, plus-end directed kinesin-like motor enzyme that plays a critical role in the organization of phragmoplast microtubules during cytokinesis. Constitutes a signaling module in association with serine/threonine-protein kinase TIO that is required to support phragmoplast expansion and cell-plate growth in plant cells. This Arabidopsis thaliana (Mouse-ear cress) protein is Kinesin-like protein KIN-12B.